We begin with the raw amino-acid sequence, 122 residues long: Insulin-like 3 (122 aa).

The N-terminal stretch at 1-15 (MRAPLLLMLLALGSA) is a signal peptide. 3 disulfide bridges follow: Cys-29–Cys-107, Cys-41–Cys-120, and Cys-106–Cys-111.

This sequence belongs to the insulin family. As to quaternary structure, heterodimer of a B chain and an A chain linked by two disulfide bonds. Expressed exclusively in Leydig cells of the testis.

The protein resides in the secreted. Functionally, seems to play a role in testicular function. May be a trophic hormone with a role in testicular descent in fetal life. Is a ligand for LGR8 receptor. The chain is Insulin-like 3 (Insl3) from Mus musculus (Mouse).